Here is a 181-residue protein sequence, read N- to C-terminus: Germinal center-associated signaling and motility protein (181 aa).

Serine 102 is modified (phosphoserine). A compositionally biased stretch (basic and acidic residues) spans 117-128; sequence AERHKESSRGTE. Positions 117-181 are disordered; that stretch reads AERHKESSRG…PYETHFSYPQ (65 aa). Tyrosine 150 bears the Phosphotyrosine mark.

In terms of assembly, interacts with ACTB and MYH2; the interaction with MYH2 is increased by IL6-induced phosphorylation. Interacts (via C-terminus) with ARHGEF11 (via DH domain). Interacts with ARHGEF12. Interacts with SYK; the interaction increases after B-cell receptor stimulation, resulting in enhanced SYK autophosphorylation and activity. In terms of processing, phosphorylation on tyrosine residues can be induced by IL6. Phosphorylation is mediated by LYN. Post-translationally, targeted by the ubiquitin E3 ligase subunit FBXO10 to mediate its ubiquitination and degradation. As to expression, highly expressed in normal germinal center (GC) B-cells. Expressed in spleen and, to a lesser extent, bone marrow.

It is found in the cytoplasm. The protein resides in the cell membrane. Involved in the negative regulation of lymphocyte motility. It mediates the migration-inhibitory effects of IL6. Serves as a positive regulator of the RhoA signaling pathway. Enhancement of RhoA activation results in inhibition of lymphocyte and lymphoma cell motility by activation of its downstream effector ROCK. Is a regulator of B-cell receptor signaling, that acts through SYK kinase activation. In Mus musculus (Mouse), this protein is Germinal center-associated signaling and motility protein (Gcsam).